Here is a 122-residue protein sequence, read N- to C-terminus: Large ribosomal subunit protein uL14c (122 aa).

Belongs to the universal ribosomal protein uL14 family. In terms of assembly, part of the 50S ribosomal subunit.

The protein resides in the plastid. The protein localises to the chloroplast. Binds to 23S rRNA. In Pyropia yezoensis (Susabi-nori), this protein is Large ribosomal subunit protein uL14c.